We begin with the raw amino-acid sequence, 415 residues long: uncharacterized protein (415 aa).

Position 88 (H88) interacts with Zn(2+). Residue D90 is part of the active site. D121 is a Zn(2+) binding site. E155 serves as the catalytic Proton acceptor. Positions 156, 185, and 392 each coordinate Zn(2+).

Belongs to the peptidase M20A family. Zn(2+) serves as cofactor. Co(2+) is required as a cofactor.

This is an uncharacterized protein from Methanococcus maripaludis (strain DSM 14266 / JCM 13030 / NBRC 101832 / S2 / LL).